A 357-amino-acid polypeptide reads, in one-letter code: Sulfate/thiosulfate import ATP-binding protein CysA (357 aa).

The region spanning 3–237 (IQIQGVSKQY…PASPFVYDFL (235 aa)) is the ABC transporter domain. Position 35–42 (35–42 (GPSGSGKT)) interacts with ATP.

This sequence belongs to the ABC transporter superfamily. Sulfate/tungstate importer (TC 3.A.1.6) family. The complex is composed of two ATP-binding proteins (CysA), two transmembrane proteins (CysT and CysW) and a solute-binding protein (CysP).

The protein resides in the cell membrane. The enzyme catalyses sulfate(out) + ATP + H2O = sulfate(in) + ADP + phosphate + H(+). The catalysed reaction is thiosulfate(out) + ATP + H2O = thiosulfate(in) + ADP + phosphate + H(+). Functionally, part of the ABC transporter complex CysAWTP involved in sulfate/thiosulfate import. Responsible for energy coupling to the transport system. The protein is Sulfate/thiosulfate import ATP-binding protein CysA of Bacillus cereus (strain ATCC 10987 / NRS 248).